Here is a 306-residue protein sequence, read N- to C-terminus: Pseudouridine-5'-phosphate glycosidase (306 aa).

The active-site Proton donor is E28. Substrate contacts are provided by K89 and V109. Position 139 (D139) interacts with Mn(2+). Residue 141-143 (SAD) coordinates substrate. Residue K160 is the Nucleophile of the active site.

This sequence belongs to the pseudouridine-5'-phosphate glycosidase family. Homotrimer. Mn(2+) serves as cofactor.

It carries out the reaction D-ribose 5-phosphate + uracil = psi-UMP + H2O. Its function is as follows. Catalyzes the reversible cleavage of pseudouridine 5'-phosphate (PsiMP) to ribose 5-phosphate and uracil. Functions biologically in the cleavage direction, as part of a pseudouridine degradation pathway. This chain is Pseudouridine-5'-phosphate glycosidase, found in Gemmatimonas aurantiaca (strain DSM 14586 / JCM 11422 / NBRC 100505 / T-27).